The following is a 379-amino-acid chain: Citrate utilization protein B (379 aa).

The [4Fe-4S] cluster site is built by cysteine 28, cysteine 31, cysteine 34, cysteine 38, cysteine 62, cysteine 65, cysteine 68, and cysteine 72.

In Escherichia coli, this protein is Citrate utilization protein B (citB).